A 263-amino-acid chain; its full sequence is Cysteine-rich repeat secretory protein 55 (263 aa).

An N-terminal signal peptide occupies residues 1 to 20 (MKTLVVKCFLLLALVCSCRA). Gnk2-homologous domains are found at residues 22 to 126 (DSIW…QENF) and 132 to 240 (TGAG…FYPF).

The protein belongs to the cysteine-rich repeat secretory protein family.

The protein resides in the secreted. This is Cysteine-rich repeat secretory protein 55 (CRRSP55) from Arabidopsis thaliana (Mouse-ear cress).